The sequence spans 160 residues: Nucleotide-binding protein CbuK_1936 (160 aa).

It belongs to the YajQ family.

Nucleotide-binding protein. This Coxiella burnetii (strain CbuK_Q154) (Coxiella burnetii (strain Q154)) protein is Nucleotide-binding protein CbuK_1936.